Here is a 160-residue protein sequence, read N- to C-terminus: Probable prefoldin subunit 5 (160 aa).

The protein belongs to the prefoldin subunit alpha family. As to quaternary structure, heterohexamer of two PFD-alpha type and four PFD-beta type subunits.

Binds specifically to cytosolic chaperonin (c-CPN) and transfers target proteins to it. Binds to nascent polypeptide chain and promotes folding in an environment in which there are many competing pathways for nonnative proteins. In Dictyostelium discoideum (Social amoeba), this protein is Probable prefoldin subunit 5 (pfdn5).